The following is a 134-amino-acid chain: uncharacterized protein (134 aa).

The protein localises to the cell membrane. May have a role in the regulation of NDH-1 biosynthesis. This is an uncharacterized protein from Paracoccus denitrificans.